Consider the following 279-residue polypeptide: MMTQMNYTGKVKRVAIIANGKYQSKRVASKLFSVFKDDPDFYLSKKNPDIVISIGGDGMLLSAFHMYEKELDKVRFVGIHTGHLGFYTDYRDFEVDKLIDNLRKDKGEQISYPILKVAITLDDGRVVKARALNEATVKRIEKTMVADVIINHVKFESFRGDGISVSTPTGSTAYNKSLGGAVLHPTIEALQLTEISSLNNRVFRTLGSSIIIPKKDKIELVPKRLGIYTISIDNKTYQLKNVTKVEYFIDDEKIHFVSSPSHTSFWERVKDAFIGETDS.

Asp57 (proton acceptor) is an active-site residue. Residues 57–58, 133–134, Arg159, Asp161, and 172–177 each bind NAD(+); these read DG, NE, and TAYNKS.

The protein belongs to the NAD kinase family. It depends on a divalent metal cation as a cofactor.

The protein resides in the cytoplasm. The catalysed reaction is NAD(+) + ATP = ADP + NADP(+) + H(+). Its function is as follows. Involved in the regulation of the intracellular balance of NAD and NADP, and is a key enzyme in the biosynthesis of NADP. Catalyzes specifically the phosphorylation on 2'-hydroxyl of the adenosine moiety of NAD to yield NADP. The polypeptide is NAD kinase (Streptococcus pyogenes serotype M12 (strain MGAS2096)).